A 128-amino-acid polypeptide reads, in one-letter code: Fluoride-specific ion channel FluC (128 aa).

Transmembrane regions (helical) follow at residues isoleucine 5–alanine 25, leucine 35–phenylalanine 55, leucine 67–valine 87, and phenylalanine 96–leucine 116. The Na(+) site is built by glycine 75 and threonine 78.

The protein belongs to the fluoride channel Fluc/FEX (TC 1.A.43) family.

The protein localises to the cell inner membrane. The catalysed reaction is fluoride(in) = fluoride(out). Its activity is regulated as follows. Na(+) is not transported, but it plays an essential structural role and its presence is essential for fluoride channel function. In terms of biological role, fluoride-specific ion channel. Important for reducing fluoride concentration in the cell, thus reducing its toxicity. The protein is Fluoride-specific ion channel FluC of Burkholderia cenocepacia (strain HI2424).